A 767-amino-acid chain; its full sequence is MAKTLGDHLLNTLEELLPYDFEKFKFKLQNTSLEKGHSKIPRGHMQMARPVKLASLLITYYGEEYAVRLTLQILRATNQRQLAEELRKATGTEHLIEENRVGGSVQSSVENKAKSVKVPDVPEGDGTQQNNDESDTLPSSQAEVGKGPQKKSLTKRKDQRGPESLDSQTKPWTRSTAPLYRRTQGTQSPGDKESTASAQLRRNVSSAGRLQGLYNNAPGRRESKKAEVYVYLPSGKKRPRSLEITTYSREGEPPNSEVLPTQEETRNGSLIRMRTATLNGRTTGALEKGTGIPEHSMVLDEKTFRNMSSKTSLIGEERCPTSWTENGNGSPETTESSGETAGSILSDPEVPLSLCEKPAKTPEDPASLGQAACEGRSQDKAVCPLCHTQEGDLRGDTCVQSSCSCSIAPGDPKASGRCSICFQCQGLLARKSCEAQSPQSLPQCPRHMKQVLLLFCEDHREPICLICRLSLEHQGHRVRPIEEAALEYKEQIREQLERLREMRGYVEEHRLQGDKKTDDFLKQTEIQKQKISCPLEKLYQLLEKQEQLFVTWLQELSQTISKVRETYYTRVSLLDEMIEELEAKQDQPEWDLMQDIGITLHRAKMMSASELLDTPPGVKEKLHLLYQKSKSVEKNMQCFSEMLSSEMAFSASDVAKWEGRQPSATQVQGLVPTVHLKCDGAHTQDCDVVFYPEREAGGSEPKDYLHPQPAQDTPELHEIHSRNNKRKFKSFLKWKPSFSRTDWRLRTCCYRDLDQAAAHPNLIFSMI.

In terms of domain architecture, Pyrin spans 1–92; the sequence is MAKTLGDHLL…AEELRKATGT (92 aa). The tract at residues 94–219 is disordered; sequence HLIEENRVGG…LQGLYNNAPG (126 aa). Composition is skewed to polar residues over residues 126 to 142, 165 to 176, and 183 to 208; these read GTQQ…SSQA, LDSQTKPWTRST, and TQGT…SSAG. Ser-241 is modified (phosphoserine). The tract at residues 311–346 is disordered; the sequence is TSLIGEERCPTSWTENGNGSPETTESSGETAGSILS. Over residues 321 to 340 the composition is skewed to polar residues; that stretch reads TSWTENGNGSPETTESSGET. The segment at 439 to 481 adopts a B box-type zinc-finger fold; the sequence is QSLPQCPRHMKQVLLLFCEDHREPICLICRLSLEHQGHRVRPI. Positions 444, 447, 467, and 473 each coordinate Zn(2+). Positions 481–510 form a coiled coil; it reads IEEAALEYKEQIREQLERLREMRGYVEEHR. Residues 489 to 647 form a required for homotrimerization and induction of pyroptosomes region; sequence KEQIREQLER…CFSEMLSSEM (159 aa). The interval 697 to 719 is disordered; the sequence is GGSEPKDYLHPQPAQDTPELHEI.

In terms of assembly, homotrimer. Interacts (via the B box-type zinc finger) with PSTPIP1. Interacts (via the B30.2/SPRY domain) with several components of the inflammasome complex, including CASP1 p20 and p10 subunits, CASP5, PYCARD, NLRP1, NLRP2 and NLRP3, as well as with unprocessed IL1B; this interaction may lead to autophagic degradation of these proteins. Component of the AIM2 PANoptosome complex, a multiprotein complex that drives inflammatory cell death (PANoptosis). Interacts with NFKBIA and RELA. Interacts weakly with VASP and ACTR3. Interacts with active ULK1 (phosphorylated on 'Ser-317') and BECN1 simultaneously. Also interacts with ATG16L1 (via WD repeats), and with ATG8 family members, including GABARAP, GABARAPL1 and, to a lesser extent, GABARAPL2, MAP1LC3A/LC3A and MAP1LC3C/LC3C. Interacts with TRIM21. Interacts with YWHAB, YWHAE, YWHAG, YWHAH, YWHAQ and YWHAZ; the interaction is required for the down-regulation of pyrin pro-inflammatory activity. In terms of processing, phosphorylation at Ser-241 is required for the interaction with 14-3-3 proteins and down-regulation of pyrin pro-inflammatory activity. Degraded along with the delivery of its substrates to autolysosomal compartments (at protein level). As to expression, expressed in spleen peripheral blood granulocytes. Not expressed in lymphocytes, thymus, testis, ovary, heart, brain, lung, liver, kidney and muscle.

The protein localises to the cytoplasm. It localises to the cytoskeleton. It is found in the cell projection. Its subcellular location is the ruffle. The protein resides in the lamellipodium. The protein localises to the cytoplasmic vesicle. It localises to the autophagosome. It is found in the nucleus. Functionally, involved in the regulation of innate immunity and the inflammatory response in response to IFNG/IFN-gamma. Organizes autophagic machinery by serving as a platform for the assembly of ULK1, Beclin 1/BECN1, ATG16L1, and ATG8 family members and recognizes specific autophagy targets, thus coordinating target recognition with assembly of the autophagic apparatus and initiation of autophagy. Acts as an autophagy receptor for the degradation of several inflammasome components, including CASP1, NLRP1 and NLRP3, hence preventing excessive IL1B- and IL18-mediated inflammation. However, it can also have a positive effect in the inflammatory pathway, acting as an innate immune sensor that triggers PYCARD/ASC specks formation, caspase-1 activation, and IL1B and IL18 production. Together with AIM2, also acts as a mediator of pyroptosis, necroptosis and apoptosis (PANoptosis), an integral part of host defense against pathogens, in response to bacterial infection. It is required for PSTPIP1-induced PYCARD/ASC oligomerization and inflammasome formation. Recruits PSTPIP1 to inflammasomes, and is required for PSTPIP1 oligomerization. In Mus musculus (Mouse), this protein is Pyrin.